The chain runs to 625 residues: Chaperone protein HtpG (625 aa).

The interval 1-337 is a; substrate-binding; it reads MSTNQETRGF…TNDLPLNVSR (337 aa). The interval 338–554 is b; the sequence is EILQENKITA…NDEMTTQMAK (217 aa). The tract at residues 555–625 is c; that stretch reads LFAAMGQKAP…FIKRMNKLLG (71 aa).

The protein belongs to the heat shock protein 90 family. In terms of assembly, homodimer.

It localises to the cytoplasm. Functionally, molecular chaperone. Has ATPase activity. The polypeptide is Chaperone protein HtpG (Actinobacillus pleuropneumoniae serotype 3 (strain JL03)).